We begin with the raw amino-acid sequence, 586 residues long: MCGILAVLGVVEVSLAKRSRIIELSRRLRHRGPDWSGLHCHEDCYLAHQRLAIIDPTSGDQPLYNEDKTVVVTVNGEIYNHEELKAKLKTHEFQTGSDCEVIAHLYEEYGEEFVDMLDGMFSFVLLDTRDKSFIAARDAIGICPLYMGWGLDGSVWFSSEMKALSDDCERFITFPPGHLYSSKTGGLRRWYNPPWFSETVPSTPYNALFLREMFEKAVIKRLMTDVPFGVLLSGGLDSSLVASVASRHLNETKVDRQWGNKLHTFCIGLKGSPDLKAAREVADYLSTVHHEFHFTVQEGIDALEEVIYHIETYDVTTIRASTPMFLMSRKIKSLGVKMVISGEGSDEIFGGYLYFHKAPNKKEFLEETCRKIKALHLYDCLRANKATSAWGVEARVPFLDKSFISVAMDIDPEWNMIKRDLGRIEKWVMRKAFDDDEHPYLPKHILYRQKEQFSDGVGYNWIDGLKSFTEQQVTDEMMNNAAQMFPYNTPVNKEAYYYRMIFERLFPQDSARETVPWGPSIACSTPAAIEWVEQWKASNDPSGRFISSHDSAATDHTAVSRRWPTAAARPANGTVNGKDVPVPIAV.

Cys2 serves as the catalytic For GATase activity. Positions 2–185 (CGILAVLGVV…PGHLYSSKTG (184 aa)) constitute a Glutamine amidotransferase type-2 domain. L-glutamine is bound by residues 50–54 (RLAII), 75–77 (NGE), and Asp98. The Asparagine synthetase domain maps to 193-516 (PPWFSETVPS…PQDSARETVP (324 aa)). ATP-binding positions include Leu231, Ile267, and 341–342 (SG).

It catalyses the reaction L-aspartate + L-glutamine + ATP + H2O = L-asparagine + L-glutamate + AMP + diphosphate + H(+). It participates in amino-acid biosynthesis; L-asparagine biosynthesis; L-asparagine from L-aspartate (L-Gln route): step 1/1. Functionally, essential for nitrogen assimilation, distribution and remobilization within the plant via the phloem. The sequence is that of Asparagine synthetase [glutamine-hydrolyzing] (ASN1) from Zea mays (Maize).